Here is a 460-residue protein sequence, read N- to C-terminus: Probable carboxypeptidase ARB_01041 (460 aa).

Positions 1 to 22 are cleaved as a signal peptide; sequence MQKTYIWALVSLLASSLVDARS. Asn-98 is a glycosylation site (N-linked (GlcNAc...) asparagine). Asp-175 is a Zn(2+) binding site. Glu-207 (proton acceptor) is an active-site residue. A Zn(2+)-binding site is contributed by Glu-208. N-linked (GlcNAc...) asparagine glycosylation occurs at Asn-395.

The protein belongs to the peptidase M20A family. Zn(2+) is required as a cofactor.

The protein localises to the secreted. In Arthroderma benhamiae (strain ATCC MYA-4681 / CBS 112371) (Trichophyton mentagrophytes), this protein is Probable carboxypeptidase ARB_01041.